Reading from the N-terminus, the 369-residue chain is Putative cyclin-F1-1 (369 aa).

Positions 328–350 (AQHHLESKPAGAAGVGINSSGDD) are disordered.

It belongs to the cyclin family. Cyclin F subfamily.

This is Putative cyclin-F1-1 (CYCF1-1) from Oryza sativa subsp. japonica (Rice).